We begin with the raw amino-acid sequence, 776 residues long: Protein SEY1 (776 aa).

Topologically, residues Met-1–His-681 are cytoplasmic. A GB1/RHD3-type G domain is found at Gly-34–Tyr-263. Gly-44–Ser-51 is a binding site for GTP. The helical transmembrane segment at Ile-682–Ile-702 threads the bilayer. The Lumenal segment spans residues Arg-703–Pro-705. The helical transmembrane segment at Leu-706–Leu-726 threads the bilayer. Residues Trp-727 to Lys-776 are Cytoplasmic-facing.

It belongs to the TRAFAC class dynamin-like GTPase superfamily. GB1/RHD3 GTPase family. RHD3 subfamily. In terms of assembly, interacts with RTN1 and YOP1; GTP binding is not required for these interactions.

It is found in the endoplasmic reticulum membrane. Cooperates with the reticulon proteins RTN1 and RTN2 and the tubule-shaping DP1 family protein YOP1 to generate and maintain the structure of the tubular endoplasmic reticulum network. Has GTPase activity, which is required for its function in ER organization. This is Protein SEY1 from Saccharomyces cerevisiae (strain RM11-1a) (Baker's yeast).